Reading from the N-terminus, the 343-residue chain is Biotin synthase (343 aa).

A Radical SAM core domain is found at 36–254 (NTIQISTLLS…IAVARIMMPK (219 aa)). 3 residues coordinate [4Fe-4S] cluster: Cys-51, Cys-55, and Cys-58. [2Fe-2S] cluster-binding residues include Cys-95, Cys-126, Cys-186, and Arg-258.

It belongs to the radical SAM superfamily. Biotin synthase family. In terms of assembly, homodimer. [4Fe-4S] cluster serves as cofactor. Requires [2Fe-2S] cluster as cofactor.

It catalyses the reaction (4R,5S)-dethiobiotin + (sulfur carrier)-SH + 2 reduced [2Fe-2S]-[ferredoxin] + 2 S-adenosyl-L-methionine = (sulfur carrier)-H + biotin + 2 5'-deoxyadenosine + 2 L-methionine + 2 oxidized [2Fe-2S]-[ferredoxin]. It participates in cofactor biosynthesis; biotin biosynthesis; biotin from 7,8-diaminononanoate: step 2/2. Catalyzes the conversion of dethiobiotin (DTB) to biotin by the insertion of a sulfur atom into dethiobiotin via a radical-based mechanism. In Buchnera aphidicola subsp. Acyrthosiphon pisum (strain APS) (Acyrthosiphon pisum symbiotic bacterium), this protein is Biotin synthase.